We begin with the raw amino-acid sequence, 489 residues long: Zeta-carotene desaturase (489 aa).

The protein belongs to the zeta carotene desaturase family. The cofactor is NAD(+). It depends on NADP(+) as a cofactor. FAD is required as a cofactor.

It carries out the reaction 9,9'-di-cis-zeta-carotene + 2 a quinone = 7,7',9,9'-tetra-cis-lycopene + 2 a quinol. It participates in carotenoid biosynthesis; lycopene biosynthesis. Catalyzes the conversion of zeta-carotene to lycopene via the intermediary of neurosporene. It carries out two consecutive desaturations (introduction of double bonds) at positions C-7 and C-7'. The chain is Zeta-carotene desaturase (crtQ) from Synechocystis sp. (strain ATCC 27184 / PCC 6803 / Kazusa).